The primary structure comprises 963 residues: TBC1 domain family member 2B (963 aa).

A disordered region spans residues 1 to 30 (MPGAGARAEEGGGGGEGAAQGAAAEPGAGP). A compositionally biased stretch (low complexity) spans 19–30 (AQGAAAEPGAGP). One can recognise a PH domain in the interval 34–139 (PARLCGYLQK…WLQELQQKRW (106 aa)). Serine 155 and serine 317 each carry phosphoserine. The segment at 272–348 (EKKKLTPEGN…EMQLQVQSQQ (77 aa)) is disordered. Positions 318–348 (GDPSSEGTSGSGSVSIRKPASEMQLQVQSQQ) are enriched in low complexity. Residues 337–535 (ASEMQLQVQS…AKYSSLEAKL (199 aa)) adopt a coiled-coil conformation. Position 473 is a phosphoserine (serine 473). One can recognise a Rab-GAP TBC domain in the interval 662 to 856 (GIPHEHRSKV…KIWDSFLYEG (195 aa)). Serine 957 is subject to Phosphoserine.

It is found in the early endosome. Its function is as follows. GTPase-activating protein that plays a role in the early steps of endocytosis. The protein is TBC1 domain family member 2B (TBC1D2B) of Homo sapiens (Human).